The sequence spans 620 residues: mRNA cap guanine-N(7) methyltransferase (620 aa).

2 disordered regions span residues 1 to 176 (MLPP…APSS) and 193 to 304 (AHAN…DDEY). Polar residues predominate over residues 29–44 (RSPSMSLSPRSQNQSL). Composition is skewed to low complexity over residues 45-60 (PYPSSRPGSAAGSAHP) and 136-157 (PQPTTTPSSPSTSQHTPYTPHH). Residues 345 to 620 (SPIIGLKKFN…LYMGFAFEKM (276 aa)) form the mRNA cap 0 methyltransferase domain. 354–355 (NN) contacts mRNA. S-adenosyl-L-methionine contacts are provided by Lys358, Gly377, Asp399, Asp428, Gln454, and Tyr459.

The protein belongs to the class I-like SAM-binding methyltransferase superfamily. mRNA cap 0 methyltransferase family.

The protein localises to the nucleus. It carries out the reaction a 5'-end (5'-triphosphoguanosine)-ribonucleoside in mRNA + S-adenosyl-L-methionine = a 5'-end (N(7)-methyl 5'-triphosphoguanosine)-ribonucleoside in mRNA + S-adenosyl-L-homocysteine. Responsible for methylating the 5'-cap structure of mRNAs. The chain is mRNA cap guanine-N(7) methyltransferase (ABD1) from Cryptococcus neoformans var. neoformans serotype D (strain JEC21 / ATCC MYA-565) (Filobasidiella neoformans).